The chain runs to 467 residues: Mitochondrial distribution and morphology protein 10 (467 aa).

Residues 361 to 393 (GLPDTAPSRNRECDDLPPPRRDNYHHQRSPHAS) form a disordered region. Residues 369–385 (RNRECDDLPPPRRDNYH) show a composition bias toward basic and acidic residues.

The protein belongs to the MDM10 family. In terms of assembly, component of the ER-mitochondria encounter structure (ERMES) or MDM complex, composed of MMM1, MDM10, MDM12 and MDM34. Associates with the mitochondrial outer membrane sorting assembly machinery SAM(core) complex.

The protein resides in the mitochondrion outer membrane. In terms of biological role, component of the ERMES/MDM complex, which serves as a molecular tether to connect the endoplasmic reticulum and mitochondria. Components of this complex are involved in the control of mitochondrial shape and protein biogenesis and may function in phospholipid exchange. MDM10 is involved in the late assembly steps of the general translocase of the mitochondrial outer membrane (TOM complex). Functions in the TOM40-specific route of the assembly of outer membrane beta-barrel proteins, including the association of TOM40 with the receptor TOM22 and small TOM proteins. Can associate with the SAM(core) complex as well as the MDM12-MMM1 complex, both involved in late steps of the major beta-barrel assembly pathway, that is responsible for biogenesis of all outer membrane beta-barrel proteins. May act as a switch that shuttles between both complexes and channels precursor proteins into the TOM40-specific pathway. Plays a role in mitochondrial morphology and in the inheritance of mitochondria. The polypeptide is Mitochondrial distribution and morphology protein 10 (Ajellomyces capsulatus (strain NAm1 / WU24) (Darling's disease fungus)).